The chain runs to 254 residues: Ribonuclease HII (254 aa).

One can recognise an RNase H type-2 domain in the interval 70–254; that stretch reads TCIAGIDEAG…SFAPVKSVIS (185 aa). Residues Asp-76, Glu-77, and Asp-168 each coordinate a divalent metal cation.

The protein belongs to the RNase HII family. It depends on Mn(2+) as a cofactor. The cofactor is Mg(2+).

It localises to the cytoplasm. It catalyses the reaction Endonucleolytic cleavage to 5'-phosphomonoester.. Endonuclease that specifically degrades the RNA of RNA-DNA hybrids. The protein is Ribonuclease HII of Bacillus pumilus (strain SAFR-032).